A 236-amino-acid polypeptide reads, in one-letter code: Proliferating cell nuclear antigen (236 aa).

A DNA-binding region spans residues 31-50; sequence RCDRNISMGMNLNNMAKMLK.

This sequence belongs to the PCNA family.

It is found in the nucleus. Its function is as follows. This protein is an auxiliary protein of DNA polymerase delta and is involved in the control of eukaryotic DNA replication by increasing the polymerase's processibility during elongation of the leading strand. The protein is Proliferating cell nuclear antigen of Glycine max (Soybean).